The primary structure comprises 689 residues: Glycine--tRNA ligase beta subunit (689 aa).

It belongs to the class-II aminoacyl-tRNA synthetase family. Tetramer of two alpha and two beta subunits.

It is found in the cytoplasm. The enzyme catalyses tRNA(Gly) + glycine + ATP = glycyl-tRNA(Gly) + AMP + diphosphate. The sequence is that of Glycine--tRNA ligase beta subunit from Erwinia tasmaniensis (strain DSM 17950 / CFBP 7177 / CIP 109463 / NCPPB 4357 / Et1/99).